The sequence spans 440 residues: L-seryl-tRNA(Sec) selenium transferase (440 aa).

K282 carries the N6-(pyridoxal phosphate)lysine modification.

The protein belongs to the SelA family. Requires pyridoxal 5'-phosphate as cofactor.

It is found in the cytoplasm. It catalyses the reaction L-seryl-tRNA(Sec) + selenophosphate + H(+) = L-selenocysteinyl-tRNA(Sec) + phosphate. The protein operates within aminoacyl-tRNA biosynthesis; selenocysteinyl-tRNA(Sec) biosynthesis; selenocysteinyl-tRNA(Sec) from L-seryl-tRNA(Sec) (bacterial route): step 1/1. In terms of biological role, converts seryl-tRNA(Sec) to selenocysteinyl-tRNA(Sec) required for selenoprotein biosynthesis. This Campylobacter jejuni subsp. jejuni serotype O:6 (strain 81116 / NCTC 11828) protein is L-seryl-tRNA(Sec) selenium transferase.